The sequence spans 572 residues: Oxygen-dependent choline dehydrogenase (572 aa).

7–36 contributes to the FAD binding site; sequence DYIIIGAGSAGNVLATRLTEDRDVTVLLLE. H474 acts as the Proton acceptor in catalysis.

Belongs to the GMC oxidoreductase family. FAD serves as cofactor.

It carries out the reaction choline + A = betaine aldehyde + AH2. The catalysed reaction is betaine aldehyde + NAD(+) + H2O = glycine betaine + NADH + 2 H(+). Its pathway is amine and polyamine biosynthesis; betaine biosynthesis via choline pathway; betaine aldehyde from choline (cytochrome c reductase route): step 1/1. In terms of biological role, involved in the biosynthesis of the osmoprotectant glycine betaine. Catalyzes the oxidation of choline to betaine aldehyde and betaine aldehyde to glycine betaine at the same rate. In Paraburkholderia phymatum (strain DSM 17167 / CIP 108236 / LMG 21445 / STM815) (Burkholderia phymatum), this protein is Oxygen-dependent choline dehydrogenase.